The following is a 238-amino-acid chain: Flagellar L-ring protein (238 aa).

An N-terminal signal peptide occupies residues Met-1–Ser-23. Cys-24 carries N-palmitoyl cysteine lipidation. Residue Cys-24 is the site of S-diacylglycerol cysteine attachment.

This sequence belongs to the FlgH family. The basal body constitutes a major portion of the flagellar organelle and consists of four rings (L,P,S, and M) mounted on a central rod.

Its subcellular location is the cell outer membrane. It is found in the bacterial flagellum basal body. Functionally, assembles around the rod to form the L-ring and probably protects the motor/basal body from shearing forces during rotation. This is Flagellar L-ring protein from Buchnera aphidicola subsp. Schizaphis graminum (strain Sg).